Reading from the N-terminus, the 201-residue chain is Small ribosomal subunit protein uS4c (201 aa).

Residues 89–152 (MRLDNILFRL…NSRTLVQNLL (64 aa)) form the S4 RNA-binding domain.

This sequence belongs to the universal ribosomal protein uS4 family. As to quaternary structure, part of the 30S ribosomal subunit. Contacts protein S5. The interaction surface between S4 and S5 is involved in control of translational fidelity.

The protein localises to the plastid. The protein resides in the chloroplast. Its function is as follows. One of the primary rRNA binding proteins, it binds directly to 16S rRNA where it nucleates assembly of the body of the 30S subunit. Functionally, with S5 and S12 plays an important role in translational accuracy. The sequence is that of Small ribosomal subunit protein uS4c (rps4) from Capsella bursa-pastoris (Shepherd's purse).